The primary structure comprises 532 residues: Pre-piRNA 3'-exonuclease trimmer (532 aa).

Mg(2+) contacts are provided by D28, E30, D270, and D365. Residues 503-523 (AGRFAIWSGSIVTGGLALYLI) form a helical membrane-spanning segment.

The protein belongs to the CAF1 family. Interacts with Papi/Tdrkh; interaction takes place on the mitochondrial surface and recruits PNLDC1/trimmer to PIWI-bound pre-piRNAs. The cofactor is Mg(2+).

It is found in the mitochondrion outer membrane. 3'-5' exonuclease that specifically cleaves precursor piRNAs (pre-piRNAs) at their 3' ends. Trims pre-piRNAs to their mature size, a process required for piRNAs maturation and stabilization, and subsequent pre-piRNAs 2'-O-methylation. The piRNA metabolic process mediates the repression of transposable elements during meiosis by forming complexes composed of piRNAs and Piwi proteins and govern the methylation and subsequent repression of transposons. The chain is Pre-piRNA 3'-exonuclease trimmer from Bombyx mori (Silk moth).